We begin with the raw amino-acid sequence, 172 residues long: C-phycocyanin beta subunit (172 aa).

Position 72 is an N4-methylasparagine (Asn72). (2R,3E)-phycocyanobilin is bound by residues Cys82 and Cys153.

This sequence belongs to the phycobiliprotein family. As to quaternary structure, heterodimer of an alpha and a beta chain, which further assembles into trimers. The trimers assemble into hexamers, although these were not seen in the crystallographic studies. Part of 2 PBS rod complexes, the conventional CpcG-PBS rod and a photosystem I-specific CpcL-PBS rod, both of which include ferredoxin--NADP reductase (petH). Interacts with rod linker CpcC2 via the latter's N-terminal PBS-linker domain. Contains two covalently linked bilin chromophores.

The protein localises to the cellular thylakoid membrane. Light-harvesting photosynthetic bile pigment-protein from the phycobiliprotein complex (phycobilisome, PBS). Phycocyanin is the major phycobiliprotein in the PBS rod. This chain is C-phycocyanin beta subunit (cpcB), found in Synechocystis sp. (strain ATCC 27184 / PCC 6803 / Kazusa).